We begin with the raw amino-acid sequence, 221 residues long: MSKILSAEFHQRHSLVVARELLGCSLVRRLATGEELRGRIVETEAYTPDDPSCHAHRRNTPRARSMFALGGISYVYIIYGIYHCLNVVTQGLGEGAAVLIRAIEPLSGNATMAQLVQKDPANPMRIASGPGMVCRALAVDKSLDGVDLSSQQAGLWFEQGPSLPDQAILQTPRIGINSDPHTVAAPWRLIVADSKALSGTRRQNQGQAYQAQPDWFQKQAI.

This sequence belongs to the DNA glycosylase MPG family.

The protein is Putative 3-methyladenine DNA glycosylase of Herpetosiphon aurantiacus (strain ATCC 23779 / DSM 785 / 114-95).